The chain runs to 23 residues: Potassium channel toxin kappa-KTx 2.3 (23 aa).

Intrachain disulfides connect Cys4-Cys22 and Cys8-Cys18.

Belongs to the short scorpion toxin superfamily. Potassium channel inhibitor kappa-KTx family. Kappa-KTx 2 subfamily. As to expression, expressed by the venom gland.

Its subcellular location is the secreted. Its function is as follows. Decreases the amplitude of the potassium current of the rat channels Kv1.1/KCNA1 by 33% and Kv1.2/KCNA2 by 8% as well as human Kv1.3/KCNA3 by 70%. This is Potassium channel toxin kappa-KTx 2.3 from Opisthacanthus madagascariensis (Scorpion).